The sequence spans 867 residues: Glutamate receptor 1.2 (867 aa).

The signal sequence occupies residues 1 to 27 (MVRICIQTPILLSFLLVLLFFISNCFA). Residues 28–560 (SSQNNDDDKR…SMWVFFQPLT (533 aa)) lie on the Extracellular side of the membrane. N-linked (GlcNAc...) asparagine glycosylation is found at Asn-301, Asn-400, Asn-496, and Asn-499. A helical membrane pass occupies residues 561–581 (PNLWITSAAFFVLTGIIVWLI). Residues 582–590 (ERAENKEFQ) are Cytoplasmic-facing. The chain crosses the membrane as a helical span at residues 591–611 (GSWPQQIGVVIWFGFSTLVYA). The Cytoplasmic portion of the chain corresponds to 612–622 (HREKLQHNLSR). The chain crosses the membrane as a helical span at residues 623–643 (FVVTVWVFAVLILVTSYTATL). Residues 644 to 792 (TSMMTVQQIR…NPITLYRFRG (149 aa)) are Extracellular-facing. Asn-676, Asn-688, Asn-699, and Asn-748 each carry an N-linked (GlcNAc...) asparagine glycan. The chain crosses the membrane as a helical span at residues 793-813 (LFMITGVSFAFALAVLLILWL). At 814-867 (RERWEILVNSVNIYFSQRLRHFRILFTRTIHPSPLGLDNPIGENAVQMAQRNRR) the chain is on the cytoplasmic side.

Belongs to the glutamate-gated ion channel (TC 1.A.10.1) family. In terms of assembly, may form heteromers. In terms of tissue distribution, expressed predominantly in roots and siliques.

It localises to the membrane. Its function is as follows. Glutamate-gated receptor that probably acts as a non-selective cation channel. May be involved in light-signal transduction and calcium homeostasis via the regulation of calcium influx into cells. This Arabidopsis thaliana (Mouse-ear cress) protein is Glutamate receptor 1.2 (GLR1.2).